A 227-amino-acid chain; its full sequence is Cytochrome c oxidase subunit 2 (227 aa).

At methionine 1–serine 14 the chain is on the mitochondrial intermembrane side. The chain crosses the membrane as a helical span at residues proline 15–methionine 45. The Mitochondrial matrix portion of the chain corresponds to leucine 46–glutamine 59. The chain crosses the membrane as a helical span at residues glutamate 60 to methionine 87. At aspartate 88–valine 227 the chain is on the mitochondrial intermembrane side. Residues histidine 161, cysteine 196, glutamate 198, cysteine 200, histidine 204, and methionine 207 each contribute to the Cu cation site. Glutamate 198 provides a ligand contact to Mg(2+). Tyrosine 218 bears the Phosphotyrosine mark.

Belongs to the cytochrome c oxidase subunit 2 family. Component of the cytochrome c oxidase (complex IV, CIV), a multisubunit enzyme composed of 14 subunits. The complex is composed of a catalytic core of 3 subunits MT-CO1, MT-CO2 and MT-CO3, encoded in the mitochondrial DNA, and 11 supernumerary subunits COX4I, COX5A, COX5B, COX6A, COX6B, COX6C, COX7A, COX7B, COX7C, COX8 and NDUFA4, which are encoded in the nuclear genome. The complex exists as a monomer or a dimer and forms supercomplexes (SCs) in the inner mitochondrial membrane with NADH-ubiquinone oxidoreductase (complex I, CI) and ubiquinol-cytochrome c oxidoreductase (cytochrome b-c1 complex, complex III, CIII), resulting in different assemblies (supercomplex SCI(1)III(2)IV(1) and megacomplex MCI(2)III(2)IV(2)). Found in a complex with TMEM177, COA6, COX18, COX20, SCO1 and SCO2. Interacts with TMEM177 in a COX20-dependent manner. Interacts with COX20. Interacts with COX16. Cu cation serves as cofactor.

It is found in the mitochondrion inner membrane. It carries out the reaction 4 Fe(II)-[cytochrome c] + O2 + 8 H(+)(in) = 4 Fe(III)-[cytochrome c] + 2 H2O + 4 H(+)(out). In terms of biological role, component of the cytochrome c oxidase, the last enzyme in the mitochondrial electron transport chain which drives oxidative phosphorylation. The respiratory chain contains 3 multisubunit complexes succinate dehydrogenase (complex II, CII), ubiquinol-cytochrome c oxidoreductase (cytochrome b-c1 complex, complex III, CIII) and cytochrome c oxidase (complex IV, CIV), that cooperate to transfer electrons derived from NADH and succinate to molecular oxygen, creating an electrochemical gradient over the inner membrane that drives transmembrane transport and the ATP synthase. Cytochrome c oxidase is the component of the respiratory chain that catalyzes the reduction of oxygen to water. Electrons originating from reduced cytochrome c in the intermembrane space (IMS) are transferred via the dinuclear copper A center (CU(A)) of subunit 2 and heme A of subunit 1 to the active site in subunit 1, a binuclear center (BNC) formed by heme A3 and copper B (CU(B)). The BNC reduces molecular oxygen to 2 water molecules using 4 electrons from cytochrome c in the IMS and 4 protons from the mitochondrial matrix. This chain is Cytochrome c oxidase subunit 2 (MT-CO2), found in Canis aureus (Golden jackal).